The sequence spans 508 residues: Maturase K (508 aa).

This sequence belongs to the intron maturase 2 family. MatK subfamily.

It is found in the plastid. The protein localises to the chloroplast. Usually encoded in the trnK tRNA gene intron. Probably assists in splicing its own and other chloroplast group II introns. The polypeptide is Maturase K (Lupinus cosentinii (West Australian blue lupine)).